The following is a 653-amino-acid chain: Chromosomal replication initiator protein DnaA (653 aa).

A domain I, interacts with DnaA modulators region spans residues 1 to 100; sequence MADVPADLAA…SAGEPPASAS (100 aa). The segment at 86 to 310 is disordered; that stretch reads ITVDDSAGEP…PAPATGPGEP (225 aa). The segment at 101–312 is domain II; the sequence is PAPPRYEEPE…PATGPGEPTA (212 aa). Basic and acidic residues-rich tracts occupy residues 120–150 and 221–267; these read DPYESRGREGYEGYGRHRADDHRQGHNDRHQ and PSYD…RRNI. Residues 284 to 310 show a composition bias toward low complexity; sequence GSALPASSGAPGPLAAQPAPATGPGEP. A domain III, AAA+ region region spans residues 313–529; that stretch reads RLNPKYLFDT…GALIRVTAFA (217 aa). Residues glycine 357, glycine 359, lysine 360, and threonine 361 each coordinate ATP. The segment at 530 to 653 is domain IV, binds dsDNA; the sequence is SLNRQPVDLG…TELTNRIKNG (124 aa).

Belongs to the DnaA family. Oligomerizes as a right-handed, spiral filament on DNA at oriC.

It is found in the cytoplasm. Plays an essential role in the initiation and regulation of chromosomal replication. ATP-DnaA binds to the origin of replication (oriC) to initiate formation of the DNA replication initiation complex once per cell cycle. Binds the DnaA box (a 9 base pair repeat at the origin) and separates the double-stranded (ds)DNA. Forms a right-handed helical filament on oriC DNA; dsDNA binds to the exterior of the filament while single-stranded (ss)DNA is stabiized in the filament's interior. The ATP-DnaA-oriC complex binds and stabilizes one strand of the AT-rich DNA unwinding element (DUE), permitting loading of DNA polymerase. After initiation quickly degrades to an ADP-DnaA complex that is not apt for DNA replication. Binds acidic phospholipids. In Streptomyces avermitilis (strain ATCC 31267 / DSM 46492 / JCM 5070 / NBRC 14893 / NCIMB 12804 / NRRL 8165 / MA-4680), this protein is Chromosomal replication initiator protein DnaA.